The primary structure comprises 204 residues: Regulatory protein RecX (204 aa).

The span at 1-22 (MTKSSRPQSISDSVSVAGSQGT) shows a compositional bias: polar residues. A disordered region spans residues 1-44 (MTKSSRPQSISDSVSVAGSQGTLDDLRARVASVPEAPTREPVDS).

This sequence belongs to the RecX family.

The protein localises to the cytoplasm. Modulates RecA activity. The protein is Regulatory protein RecX of Mycobacteroides abscessus (strain ATCC 19977 / DSM 44196 / CCUG 20993 / CIP 104536 / JCM 13569 / NCTC 13031 / TMC 1543 / L948) (Mycobacterium abscessus).